Consider the following 104-residue polypeptide: Guanidinium exporter (104 aa).

The Cytoplasmic portion of the chain corresponds to 1 to 3 (MSW). A helical transmembrane segment spans residues 4–26 (IILFVAGLLEIVWAVGLKYTHGF). The Periplasmic segment spans residues 27 to 32 (TRLTPS). A helical transmembrane segment spans residues 33–50 (IITISAMIVSMGMLSYAM). At 51–54 (KGLP) the chain is on the cytoplasmic side. Residues 55-77 (AGTAYAIWTGIGAVGTAIFGIIV) form a helical membrane-spanning segment. At 78–83 (FGESAN) the chain is on the periplasmic side. A helical transmembrane segment spans residues 84–103 (IYRLLSLAMIVFGIIGLKLA). Position 104 (S104) is a topological domain, cytoplasmic.

This sequence belongs to the drug/metabolite transporter (DMT) superfamily. Small multidrug resistance (SMR) (TC 2.A.7.1) family. Gdx/SugE subfamily.

The protein resides in the cell inner membrane. Functionally, guanidinium ion exporter. Couples guanidinium export to the proton motive force, exchanging one guanidinium ion for two protons. This chain is Guanidinium exporter, found in Proteus vulgaris.